Reading from the N-terminus, the 183-residue chain is uncharacterized protein (183 aa).

Disordered regions lie at residues 1 to 44 (MPFY…VMTA), 68 to 137 (GRAG…LGLR), and 163 to 183 (RDDPRESEVRPVTGVQTVWPE).

This is an uncharacterized protein from Dryophytes versicolor (chameleon treefrog).